A 241-amino-acid polypeptide reads, in one-letter code: Orotidine 5'-phosphate decarboxylase (241 aa).

Substrate contacts are provided by residues Asp16, Lys37, 64–73 (DLKFHDIPTT), Thr128, Arg190, Gln199, Gly219, and Arg220. Lys66 (proton donor) is an active-site residue.

Belongs to the OMP decarboxylase family. Type 1 subfamily. In terms of assembly, homodimer.

The catalysed reaction is orotidine 5'-phosphate + H(+) = UMP + CO2. Its pathway is pyrimidine metabolism; UMP biosynthesis via de novo pathway; UMP from orotate: step 2/2. Its function is as follows. Catalyzes the decarboxylation of orotidine 5'-monophosphate (OMP) to uridine 5'-monophosphate (UMP). In Prochlorococcus marinus (strain NATL1A), this protein is Orotidine 5'-phosphate decarboxylase.